The following is a 310-amino-acid chain: tRNA dimethylallyltransferase (310 aa).

Glycine 14–serine 21 provides a ligand contact to ATP. Threonine 16 to serine 21 is a binding site for substrate. Interaction with substrate tRNA stretches follow at residues aspartate 39 to glutamine 42 and glutamine 163 to arginine 167.

Belongs to the IPP transferase family. As to quaternary structure, monomer. Requires Mg(2+) as cofactor.

The enzyme catalyses adenosine(37) in tRNA + dimethylallyl diphosphate = N(6)-dimethylallyladenosine(37) in tRNA + diphosphate. Catalyzes the transfer of a dimethylallyl group onto the adenine at position 37 in tRNAs that read codons beginning with uridine, leading to the formation of N6-(dimethylallyl)adenosine (i(6)A). The protein is tRNA dimethylallyltransferase of Brucella abortus (strain S19).